Here is a 199-residue protein sequence, read N- to C-terminus: Adenylyl-sulfate kinase (199 aa).

Residue 31–38 (GLSGSGKS) participates in ATP binding. Catalysis depends on serine 105, which acts as the Phosphoserine intermediate.

It belongs to the APS kinase family.

The catalysed reaction is adenosine 5'-phosphosulfate + ATP = 3'-phosphoadenylyl sulfate + ADP + H(+). It functions in the pathway sulfur metabolism; hydrogen sulfide biosynthesis; sulfite from sulfate: step 2/3. Its function is as follows. Catalyzes the synthesis of activated sulfate. The polypeptide is Adenylyl-sulfate kinase (Marinobacter nauticus (strain ATCC 700491 / DSM 11845 / VT8) (Marinobacter aquaeolei)).